The primary structure comprises 356 residues: MRRELLLEKIETYKAIMPWYVLDYYQSKLAVPYSFTTLYEYLKEYKRFFDWLMDADLTQAPKIADIDLSTLEHLTKKDLEAFVLYLRERPSLNTYSTKEGLSQTTINRTLSALSSLYKYLTEEVENDQGEPYFYRNVMKKVSTKKKKETLASRAENIKQKLFLGDETLAFLDYVDKEYEQKLSNRAKSSFRKNKERDLAIIALLLASGVRLSEAVNLDLKDVNLNMMIIEVIRKGGKRDSVNVAGFAKGYLESYLAVRQRRYKAEKQDLAFFLTEYRGVPNRMDASSIEKMVGKYSEDFKIRVTPHKLRHTLATRLYDATKSQVLVSHQLGHSSTQVTDLYTHIVNDEQKNALDNL.

Residues 16 to 121 enclose the Core-binding (CB) domain; sequence IMPWYVLDYY…ALSSLYKYLT (106 aa). The Tyr recombinase domain maps to 169 to 354; it reads AFLDYVDKEY…VNDEQKNALD (186 aa). Residues arginine 210, lysine 234, histidine 306, arginine 309, and histidine 332 contribute to the active site. Tyrosine 341 serves as the catalytic O-(3'-phospho-DNA)-tyrosine intermediate.

It belongs to the 'phage' integrase family. XerS subfamily.

The protein localises to the cytoplasm. Its activity is regulated as follows. FtsK is required for recombination. In terms of biological role, site-specific tyrosine recombinase, which acts by catalyzing the cutting and rejoining of the recombining DNA molecules. Essential to convert dimers of the bacterial chromosome into monomers to permit their segregation at cell division. This is Tyrosine recombinase XerS from Streptococcus pyogenes serotype M1.